We begin with the raw amino-acid sequence, 93 residues long: Probable endoribonuclease MazF1 (93 aa).

It belongs to the PemK/MazF family. Forms a complex with cognate antitoxin MazE1.

Functionally, toxic component of a type II toxin-antitoxin (TA) system, its cognate antitoxin is MazE1. Probably an endoribonuclease. In Mycobacterium tuberculosis (strain ATCC 25618 / H37Rv), this protein is Probable endoribonuclease MazF1 (mazF1).